The primary structure comprises 395 residues: Protein BUR2 (395 aa).

2 disordered regions span residues 1–31 and 372–395; these read MSATSSSGDVKKFQAVPKPTSNASPPPASSG and AKQESMKRKAKDPIRTPDAKKPKI. S24 is modified (phosphoserine).

Belongs to the BUR kinase complex composed of SGV1/BUR1 and BUR2. Interacts with SGV1.

The protein resides in the nucleus. Component of the BUR kinase complex involved in transcription regulation. This complex phosphorylates 'Ser-120' of the UBC2/RAD6 ubiquitin-conjugating enzyme (E2), leading to monoubiquitination of histone H2B, the localization of the PAF1 complex to the chromatin, and the silencing of telomeric-associated genes. Also required for histone H3 'Lys-4' trimethylation. May phosphorylate the 'Ser-5' of the RBP1 carboxy-terminal domain (CTD) repeats. Necessary for the recovery from pheromone-induced growth arrest in the cell cycle G1 phase. Also required for vegetative growth itself. The kinase activity of the complex requires the presence of BUR2. Overexpression of BUR2 interferes with mitotic chromosome segregation. This chain is Protein BUR2 (BUR2), found in Saccharomyces cerevisiae (strain ATCC 204508 / S288c) (Baker's yeast).